The chain runs to 782 residues: Beta-mannosyltransferase 9 (782 aa).

The Cytoplasmic segment spans residues 1 to 26 (MEKLIQSTISLFISLSLKISTKSYKS). Residues 27–47 (IISILFIISLLSIILTTTITV) form a helical membrane-spanning segment. Over 48-782 (YHDPERIITT…GKDKGKDKSN (735 aa)) the chain is Extracellular. Residues 66–96 (KSVFTASSPKQQDKLQQEIDQHQSDNSHEQQ) form a disordered region. Positions 76-96 (QQDKLQQEIDQHQSDNSHEQQ) are enriched in basic and acidic residues. N-linked (GlcNAc...) asparagine glycosylation is found at Asn445, Asn648, and Asn699.

Belongs to the BMT family.

The protein resides in the membrane. In terms of biological role, beta-mannosyltransferase involved in cell wall biosynthesis through beta-1,2-mannosylation of cell wall phosphopeptidomannan. The chain is Beta-mannosyltransferase 9 (BMT9) from Candida albicans (strain SC5314 / ATCC MYA-2876) (Yeast).